The sequence spans 419 residues: UDP-N-acetylmuramoylalanine--D-glutamate ligase (419 aa).

109–115 (GSTGKTT) provides a ligand contact to ATP.

The protein belongs to the MurCDEF family.

The protein resides in the cytoplasm. The catalysed reaction is UDP-N-acetyl-alpha-D-muramoyl-L-alanine + D-glutamate + ATP = UDP-N-acetyl-alpha-D-muramoyl-L-alanyl-D-glutamate + ADP + phosphate + H(+). It participates in cell wall biogenesis; peptidoglycan biosynthesis. In terms of biological role, cell wall formation. Catalyzes the addition of glutamate to the nucleotide precursor UDP-N-acetylmuramoyl-L-alanine (UMA). The protein is UDP-N-acetylmuramoylalanine--D-glutamate ligase of Chlamydia felis (strain Fe/C-56) (Chlamydophila felis).